A 559-amino-acid chain; its full sequence is DNA ligase (559 aa).

ATP is bound at residue Glu247. Residue Lys249 is the N6-AMP-lysine intermediate of the active site. Residues Arg254, Arg269, Glu299, Phe339, Arg414, and Lys420 each contribute to the ATP site.

This sequence belongs to the ATP-dependent DNA ligase family. It depends on Mg(2+) as a cofactor.

The catalysed reaction is ATP + (deoxyribonucleotide)n-3'-hydroxyl + 5'-phospho-(deoxyribonucleotide)m = (deoxyribonucleotide)n+m + AMP + diphosphate.. It catalyses the reaction NAD(+) + (deoxyribonucleotide)n-3'-hydroxyl + 5'-phospho-(deoxyribonucleotide)m = (deoxyribonucleotide)n+m + AMP + beta-nicotinamide D-nucleotide.. DNA ligase that seals nicks in double-stranded DNA during DNA replication, DNA recombination and DNA repair. Shows high activity with either ATP or NAD(+). This chain is DNA ligase, found in Thermococcus fumicolans.